Reading from the N-terminus, the 412-residue chain is MEALQKQQAARLAQGVGPLAPACPLLPPQPPLPDHRTLQAPEGALGNVGAEEEEDAEEDEEKREEAGAEEEAAEESRPGAQGPSSPSSQPPGLHPHEWTYEEQFKQLYELDADPKRKEFLDDLFSFMQKRGTPVNRVPIMAKQVLDLYALFRLVTAKGGLVEVINRKVWREVTRGLSLPTTITSAAFTLRTQYMKYLYPYECETRALSSPGELQAAIDSNRREGRRQAYTATPLFGLAGPPPRGAQDPALGPGPAPPATQSSPGPAQGSTSGLPAHACAQLSPSPIKKEESGIPNPCLALPVGLALGPTREKLAPEEPPEKRAVLMGPMDPPRPCMPPSFLPRGKVPLREERLDGPLNLAGSGISSINMALEINGVVYTGVLFARRQPVPASQGPTNPAPPPSTGPPSSILP.

Residues 1–23 (MEALQKQQAARLAQGVGPLAPAC) show a composition bias toward low complexity. The disordered stretch occupies residues 1-96 (MEALQKQQAA…SSQPPGLHPH (96 aa)). The span at 50–73 (AEEEEDAEEDEEKREEAGAEEEAA) shows a compositional bias: acidic residues. Low complexity predominate over residues 78-87 (PGAQGPSSPS). Residues 113–205 (DPKRKEFLDD…YLYPYECETR (93 aa)) enclose the ARID domain. Disordered regions lie at residues 232 to 278 (TPLF…AHAC) and 388 to 412 (PVPA…SILP). Positions 259–272 (TQSSPGPAQGSTSG) are enriched in polar residues. An REKLES domain is found at 304–389 (LALGPTREKL…GVLFARRQPV (86 aa)).

In terms of assembly, interacts (via REKLES DOMAIN) with NPM1; the interaction mediates ARID3C nuclear shuttling.

It is found in the nucleus. In terms of biological role, transcription factor involved in monocyte-to-macrophage differentiation. Forms a complex with NPM1 to translocate to the nucleus, acting as a transcription factor that promotes the expression of the genes involved in macrophage differentiation, such as STAT3, STAT1 and JUNB. This chain is AT-rich interactive domain-containing protein 3C, found in Homo sapiens (Human).